The primary structure comprises 366 residues: NADH-quinone oxidoreductase subunit H (366 aa).

The next 8 helical transmembrane spans lie at 27–47 (LLLI…LTFA), 99–119 (FLFL…WAVV), 134–154 (LLYI…AGWA), 168–188 (AAQV…VLMM), 206–226 (FLNW…ISGV), 268–288 (ILVA…PVDI), 294–314 (IPGM…FLWF), and 329–349 (LGWK…GMVM).

It belongs to the complex I subunit 1 family. As to quaternary structure, NDH-1 is composed of 14 different subunits. Subunits NuoA, H, J, K, L, M, N constitute the membrane sector of the complex.

Its subcellular location is the cell inner membrane. The enzyme catalyses a quinone + NADH + 5 H(+)(in) = a quinol + NAD(+) + 4 H(+)(out). Functionally, NDH-1 shuttles electrons from NADH, via FMN and iron-sulfur (Fe-S) centers, to quinones in the respiratory chain. The immediate electron acceptor for the enzyme in this species is believed to be ubiquinone. Couples the redox reaction to proton translocation (for every two electrons transferred, four hydrogen ions are translocated across the cytoplasmic membrane), and thus conserves the redox energy in a proton gradient. This subunit may bind ubiquinone. This Nitrosomonas europaea (strain ATCC 19718 / CIP 103999 / KCTC 2705 / NBRC 14298) protein is NADH-quinone oxidoreductase subunit H.